Consider the following 555-residue polypeptide: Glutamine--tRNA ligase (555 aa).

Positions 35–45 (PEPNGYLHIGH) match the 'HIGH' region motif. Residues 36–38 (EPN) and 42–48 (HIGHAKS) each bind ATP. L-glutamine-binding residues include aspartate 68 and tyrosine 213. Residues threonine 232 and 262–263 (RL) contribute to the ATP site. The short motif at 269–273 (ITSKR) is the 'KMSKS' region element.

This sequence belongs to the class-I aminoacyl-tRNA synthetase family. As to quaternary structure, monomer.

It localises to the cytoplasm. The enzyme catalyses tRNA(Gln) + L-glutamine + ATP = L-glutaminyl-tRNA(Gln) + AMP + diphosphate. The protein is Glutamine--tRNA ligase of Stutzerimonas stutzeri (strain A1501) (Pseudomonas stutzeri).